The chain runs to 346 residues: fMet-Leu-Phe receptor (346 aa).

N-linked (GlcNAc...) asparagine glycosylation is found at asparagine 1 and asparagine 7. At asparagine 1–isoleucine 24 the chain is on the extracellular side. Residues isoleucine 25 to valine 47 form a helical membrane-spanning segment. Residues alanine 48–threonine 58 lie on the Cytoplasmic side of the membrane. Residues isoleucine 59–valine 80 form a helical membrane-spanning segment. Residues arginine 81–phenylalanine 97 are Extracellular-facing. Cysteines 95 and 173 form a disulfide. Residues isoleucine 98–leucine 118 traverse the membrane as a helical segment. Topologically, residues aspartate 119–serine 137 are cytoplasmic. Residues leucine 138–isoleucine 159 form a helical membrane-spanning segment. Residues arginine 160–arginine 202 lie on the Extracellular side of the membrane. Residues phenylalanine 203 to threonine 223 traverse the membrane as a helical segment. Over lysine 224–valine 239 the chain is Cytoplasmic. Residues leucine 240–valine 263 traverse the membrane as a helical segment. Residues arginine 264–valine 282 are Extracellular-facing. The chain crosses the membrane as a helical span at residues threonine 283–glycine 302. Residues glutamine 303 to alanine 346 lie on the Cytoplasmic side of the membrane. Positions threonine 322–alanine 346 are disordered. Residues glutamate 323–proline 338 show a composition bias toward polar residues.

This sequence belongs to the G-protein coupled receptor 1 family. Phosphorylated; which is necessary for desensitization.

The protein localises to the cell membrane. In terms of biological role, high affinity receptor for N-formyl-methionyl peptides (fMLP), which are powerful neutrophil chemotactic factors. Binding of fMLP to the receptor stimulates intracellular calcium mobilization and superoxide anion release. This response is mediated via a G-protein that activates a phosphatidylinositol-calcium second messenger system. Receptor for TAFA4, mediates its effects on chemoattracting macrophages, promoting phagocytosis and increasing ROS release. Receptor for cathepsin CTSG, leading to increased phagocyte chemotaxis. In Pan troglodytes (Chimpanzee), this protein is fMet-Leu-Phe receptor (FPR1).